Here is a 286-residue protein sequence, read N- to C-terminus: MLRVAVPNKGSLSEAASAMLSEAGYRQRRDTRELVMVDPDNDIEFFFLRPRDIAVYVGRGTLDVGITGRDLLLDAEVEAEELLPLGFAASTFRFAGPVGDFTKVEELEGKRLATSYDGLLRGYLAERGINAKVVRLDGAVESSVRLGVADAIADVVETGNTLKAAGMEIFGEPILKSEAVLIRRTGQEGAANGTAKEIEVLIRRLQGVLVARQYVLMDYDIRKELVEQAAALTPGLESPTVSPLRDSDWVAVRSMVPKKETNRIMDELYDLGARAILVSSIHACRI.

Belongs to the ATP phosphoribosyltransferase family. Long subfamily. Requires Mg(2+) as cofactor.

Its subcellular location is the cytoplasm. The enzyme catalyses 1-(5-phospho-beta-D-ribosyl)-ATP + diphosphate = 5-phospho-alpha-D-ribose 1-diphosphate + ATP. It functions in the pathway amino-acid biosynthesis; L-histidine biosynthesis; L-histidine from 5-phospho-alpha-D-ribose 1-diphosphate: step 1/9. With respect to regulation, feedback inhibited by histidine. Its function is as follows. Catalyzes the condensation of ATP and 5-phosphoribose 1-diphosphate to form N'-(5'-phosphoribosyl)-ATP (PR-ATP). Has a crucial role in the pathway because the rate of histidine biosynthesis seems to be controlled primarily by regulation of HisG enzymatic activity. This chain is ATP phosphoribosyltransferase, found in Arthrobacter sp. (strain FB24).